We begin with the raw amino-acid sequence, 288 residues long: Shikimate dehydrogenase (NADP(+)) (288 aa).

Shikimate is bound by residues 15–17 (SKS) and Thr64. The Proton acceptor role is filled by Lys68. Position 83 (Glu83) interacts with NADP(+). Shikimate-binding residues include Asn92 and Asp117. NADP(+) contacts are provided by residues 141-145 (GAGGA), 165-170 (NRTLSK), and Met232. Tyr234 contributes to the shikimate binding site. Gly254 is an NADP(+) binding site.

This sequence belongs to the shikimate dehydrogenase family. Homodimer.

It carries out the reaction shikimate + NADP(+) = 3-dehydroshikimate + NADPH + H(+). It functions in the pathway metabolic intermediate biosynthesis; chorismate biosynthesis; chorismate from D-erythrose 4-phosphate and phosphoenolpyruvate: step 4/7. In terms of biological role, involved in the biosynthesis of the chorismate, which leads to the biosynthesis of aromatic amino acids. Catalyzes the reversible NADPH linked reduction of 3-dehydroshikimate (DHSA) to yield shikimate (SA). The polypeptide is Shikimate dehydrogenase (NADP(+)) (Psychrobacter arcticus (strain DSM 17307 / VKM B-2377 / 273-4)).